The primary structure comprises 438 residues: Ribosomal protein uS12 methylthiotransferase RimO (438 aa).

In terms of domain architecture, MTTase N-terminal spans 4 to 114 (PRVSFVSLGC…VMNAVHEVAP (111 aa)). [4Fe-4S] cluster-binding residues include Cys-13, Cys-49, Cys-78, Cys-146, Cys-150, and Cys-153. One can recognise a Radical SAM core domain in the interval 132–370 (LTPRHYAYLK…MAKQQQISTN (239 aa)). The region spanning 373 to 438 (KKKVGKRLPV…DAYDLHGTAV (66 aa)) is the TRAM domain.

Belongs to the methylthiotransferase family. RimO subfamily. [4Fe-4S] cluster serves as cofactor.

The protein localises to the cytoplasm. The catalysed reaction is L-aspartate(89)-[ribosomal protein uS12]-hydrogen + (sulfur carrier)-SH + AH2 + 2 S-adenosyl-L-methionine = 3-methylsulfanyl-L-aspartate(89)-[ribosomal protein uS12]-hydrogen + (sulfur carrier)-H + 5'-deoxyadenosine + L-methionine + A + S-adenosyl-L-homocysteine + 2 H(+). In terms of biological role, catalyzes the methylthiolation of an aspartic acid residue of ribosomal protein uS12. The sequence is that of Ribosomal protein uS12 methylthiotransferase RimO from Brucella ovis (strain ATCC 25840 / 63/290 / NCTC 10512).